The chain runs to 248 residues: Triosephosphate isomerase (248 aa).

Residue asparagine 9–lysine 11 participates in substrate binding. Histidine 93 serves as the catalytic Electrophile. Glutamate 163 (proton acceptor) is an active-site residue. Substrate contacts are provided by residues glycine 169, serine 208, and glycine 229 to glycine 230.

This sequence belongs to the triosephosphate isomerase family. As to quaternary structure, homodimer.

The protein resides in the cytoplasm. It carries out the reaction D-glyceraldehyde 3-phosphate = dihydroxyacetone phosphate. Its pathway is carbohydrate biosynthesis; gluconeogenesis. It participates in carbohydrate degradation; glycolysis; D-glyceraldehyde 3-phosphate from glycerone phosphate: step 1/1. Functionally, involved in the gluconeogenesis. Catalyzes stereospecifically the conversion of dihydroxyacetone phosphate (DHAP) to D-glyceraldehyde-3-phosphate (G3P). The polypeptide is Triosephosphate isomerase (Jannaschia sp. (strain CCS1)).